Consider the following 448-residue polypeptide: MAHIKFDYSKLTPFVAENELYEIQWQIDGAAKLLHEGKGAGSDYIGWLDLPEDYDKEEFARIQKAAKKIKSDSEVLIVIGIGGSYLGARAAIDFLSNSFVNLQTAEERKAPRILYAGNSISSSYLADLVDYVADKDFSVNVISKSGTTTEPAIAFRVFEEMLVKKYGREEANKRIYATTDKEKGAVKVNADANNWETFVVPDSVGGRFSVLTAVGLLPIAASGADITALMEGANAARKEYTSTNVHENDAYAYAALRNILYRKGKFSEILINYEPSLQYFSEWWKQLAGESEGKDQKGIYPTSANFSTDLHSLGQWIQEGTRTVFETAIRIEKPRKNINIPELDADLDGLGYLQGKDVDFVNKKAADGVLLAHTDGNVPNMIVTLPEQDEFTLGYAIYFFELAIGVSGYLNGINPFNQPGVEAYKKNMFALLGKPGFEELSKELNDRL.

The active-site Proton donor is glutamate 290. Residues histidine 311 and lysine 425 contribute to the active site.

The protein belongs to the GPI family.

The protein localises to the cytoplasm. It carries out the reaction alpha-D-glucose 6-phosphate = beta-D-fructose 6-phosphate. The protein operates within carbohydrate biosynthesis; gluconeogenesis. It functions in the pathway carbohydrate degradation; glycolysis; D-glyceraldehyde 3-phosphate and glycerone phosphate from D-glucose: step 2/4. Its function is as follows. Catalyzes the reversible isomerization of glucose-6-phosphate to fructose-6-phosphate. This Lactococcus lactis subsp. cremoris (strain SK11) protein is Glucose-6-phosphate isomerase.